Here is a 377-residue protein sequence, read N- to C-terminus: Chaperone protein DnaJ (377 aa).

Positions 5-70 (DYYELLGLQK…EKKAKYDQFG (66 aa)) constitute a J domain. Residues 137–219 (GVEKEISVTR…CRGKGSVRKT (83 aa)) form a CR-type zinc finger. The Zn(2+) site is built by C150, C153, C167, C170, C193, C196, C207, and C210. CXXCXGXG motif repeat units lie at residues 150–157 (CEHCHGSG), 167–174 (CPTCSGSG), 193–200 (CDTCRGTG), and 207–214 (CSECRGKG).

This sequence belongs to the DnaJ family. Homodimer. Zn(2+) is required as a cofactor.

Its subcellular location is the cytoplasm. Its function is as follows. Participates actively in the response to hyperosmotic and heat shock by preventing the aggregation of stress-denatured proteins and by disaggregating proteins, also in an autonomous, DnaK-independent fashion. Unfolded proteins bind initially to DnaJ; upon interaction with the DnaJ-bound protein, DnaK hydrolyzes its bound ATP, resulting in the formation of a stable complex. GrpE releases ADP from DnaK; ATP binding to DnaK triggers the release of the substrate protein, thus completing the reaction cycle. Several rounds of ATP-dependent interactions between DnaJ, DnaK and GrpE are required for fully efficient folding. Also involved, together with DnaK and GrpE, in the DNA replication of plasmids through activation of initiation proteins. This Clostridium beijerinckii (strain ATCC 51743 / NCIMB 8052) (Clostridium acetobutylicum) protein is Chaperone protein DnaJ.